We begin with the raw amino-acid sequence, 530 residues long: Ubiquitin carboxyl-terminal hydrolase 17-like protein 20 (530 aa).

The 296-residue stretch at 80-375 (AGLQNMGNTC…QAYVLFYIQK (296 aa)) folds into the USP domain. Cysteine 89 (nucleophile) is an active-site residue. The Proton acceptor role is filled by histidine 334. Composition is skewed to basic and acidic residues over residues 382 to 392 (SESVSRGREPR) and 398 to 413 (DTDR…RDHP). Disordered regions lie at residues 382–413 (SESV…RDHP) and 509–530 (RGRA…LVCQ). Over residues 510 to 524 (GRARRSKGKNKHSKR) the composition is skewed to basic residues.

The protein belongs to the peptidase C19 family. USP17 subfamily.

Its subcellular location is the nucleus. The protein resides in the endoplasmic reticulum. The enzyme catalyses Thiol-dependent hydrolysis of ester, thioester, amide, peptide and isopeptide bonds formed by the C-terminal Gly of ubiquitin (a 76-residue protein attached to proteins as an intracellular targeting signal).. Deubiquitinating enzyme that removes conjugated ubiquitin from specific proteins to regulate different cellular processes that may include cell proliferation, progression through the cell cycle, apoptosis, cell migration, and the cellular response to viral infection. This chain is Ubiquitin carboxyl-terminal hydrolase 17-like protein 20 (USP17L20), found in Homo sapiens (Human).